The following is a 166-amino-acid chain: Urease accessory protein UreE (166 aa).

The protein belongs to the UreE family.

Its subcellular location is the cytoplasm. In terms of biological role, involved in urease metallocenter assembly. Binds nickel. Probably functions as a nickel donor during metallocenter assembly. In Pseudomonas fluorescens (strain Pf0-1), this protein is Urease accessory protein UreE.